The chain runs to 399 residues: MSIRYIDEISDLREKKIFMRVDFNVPLDEHQNITEDTRIRAVLPTINYALDYNAKVVLASHLGRPKGERNAKYSMAPAAKRLSRLLGKEVKLAPDCIGDGVSKIIDSMQPGDVVMLENLRFYPGEEKNDDDFAKALADHCDIYVNDAFAVSHRAHASVEAITKFFPIVAAGFLMKNEMSYFEKSMKNPIRPLVAILGGAKVSGKLEVLENLCNKVDKVIIGGGMAFTFLKALGYNVGKSLVEENLLETALNTYNKAREKGIKFYLPVDCVVADQFNPAAETKVTTIQEIPEGWMALDIGPATVTLFSTALQNAKTIVWNGPMGVFEMDAFSRGTFAMVSAVANSYALTIVGGGDTDVAVHRAGEYAKISYISTGGGAFLELLEGKKLPGIKVLEDNGHK.

Residues 22–24 (DFN), R38, 61–64 (HLGR), R120, and R153 contribute to the substrate site. Residues K204, E326, and 352-355 (GGDT) contribute to the ATP site.

Belongs to the phosphoglycerate kinase family. Monomer.

The protein localises to the cytoplasm. The catalysed reaction is (2R)-3-phosphoglycerate + ATP = (2R)-3-phospho-glyceroyl phosphate + ADP. The protein operates within carbohydrate degradation; glycolysis; pyruvate from D-glyceraldehyde 3-phosphate: step 2/5. This chain is Phosphoglycerate kinase, found in Geotalea uraniireducens (strain Rf4) (Geobacter uraniireducens).